Here is a 440-residue protein sequence, read N- to C-terminus: Acetylornithine deacetylase (440 aa).

Residue His101 coordinates Zn(2+). The active site involves Asp103. Zn(2+) is bound at residue Asp133. Glu167 acts as the Proton acceptor in catalysis. Residues Glu168 and His412 each coordinate Zn(2+).

This sequence belongs to the peptidase M20A family. ArgE subfamily. Homodimer. Zn(2+) serves as cofactor. Requires Co(2+) as cofactor.

It catalyses the reaction N(2)-acetyl-L-ornithine + H2O = L-ornithine + acetate. Its pathway is amino-acid biosynthesis; L-arginine biosynthesis; L-ornithine from N(2)-acetyl-L-ornithine (linear): step 1/1. This Arabidopsis thaliana (Mouse-ear cress) protein is Acetylornithine deacetylase.